The following is a 2508-amino-acid chain: Male gametocyte surface protein P230p (2508 aa).

The N-terminal stretch at 1–34 is a signal peptide; the sequence is MFIYLFIYLFFKMDKKRTFYYLFFFFTFLVYVLY. N-linked (GlcNAc...) asparagine glycosylation is found at asparagine 230, asparagine 254, asparagine 362, and asparagine 414. One can recognise a 6-Cys 1 domain in the interval 394 to 516; sequence KILGLSTNEK…GLGETSVDKD (123 aa). Cysteine 443 and cysteine 493 are disulfide-bonded. N-linked (GlcNAc...) asparagine glycans are attached at residues asparagine 601 and asparagine 674. 6-Cys domains lie at 676–800, 831–1096, 1099–1231, 1268–1428, and 1433–1565; these read SVSF…IVKR, ITYL…LKSF, PIEG…LELN, KKHI…IPQH, and KFYG…NEDI. The cysteines at positions 680 and 700 are disulfide-linked. Asparagine 703 carries N-linked (GlcNAc...) asparagine glycosylation. Intrachain disulfides connect cysteine 714-cysteine 775 and cysteine 725-cysteine 773. Asparagine 779, asparagine 849, asparagine 986, asparagine 995, asparagine 1065, and asparagine 1074 each carry an N-linked (GlcNAc...) asparagine glycan. Intrachain disulfides connect cysteine 835/cysteine 856 and cysteine 871/cysteine 1072. 3 disulfides stabilise this stretch: cysteine 1103–cysteine 1129, cysteine 1144–cysteine 1206, and cysteine 1157–cysteine 1204. A glycan (N-linked (GlcNAc...) asparagine) is linked at asparagine 1231. Disulfide bonds link cysteine 1272-cysteine 1293, cysteine 1308-cysteine 1404, cysteine 1437-cysteine 1464, cysteine 1478-cysteine 1547, and cysteine 1488-cysteine 1545. Residue asparagine 1385 is glycosylated (N-linked (GlcNAc...) asparagine). N-linked (GlcNAc...) asparagine glycosylation is found at asparagine 1525, asparagine 1550, asparagine 1567, asparagine 1750, asparagine 1755, and asparagine 1788. 6-Cys domains follow at residues 1656–1804 and 1807–1984; these read KKKI…IKKN and KILG…IVGD. A disulfide bridge links cysteine 1704 with cysteine 1782. 3 disulfides stabilise this stretch: cysteine 1811-cysteine 1883, cysteine 1897-cysteine 1966, and cysteine 1908-cysteine 1964. N-linked (GlcNAc...) asparagine glycans are attached at residues asparagine 2016 and asparagine 2047. The disordered stretch occupies residues 2081–2113; that stretch reads SDEGDGYQADEDIGGEDDAEDVDGEGDDEDDNI. The span at 2082–2112 shows a compositional bias: acidic residues; sequence DEGDGYQADEDIGGEDDAEDVDGEGDDEDDN. Residues asparagine 2143, asparagine 2211, asparagine 2239, and asparagine 2255 are each glycosylated (N-linked (GlcNAc...) asparagine). 6-Cys domains follow at residues 2197-2354 and 2357-2481; these read IINI…VKSN and KIYG…YEPY. 3 disulfide bridges follow: cysteine 2361-cysteine 2386, cysteine 2400-cysteine 2461, and cysteine 2411-cysteine 2459.

It is found in the cell surface. Its subcellular location is the cell membrane. In terms of biological role, plays an essential role in male gamete fertility. Required for the binding to erythrocytes and thus, for the formation of exflagellation centers. The polypeptide is Male gametocyte surface protein P230p (PFS230P) (Plasmodium falciparum (isolate 3D7)).